Consider the following 443-residue polypeptide: Chromosomal replication initiator protein DnaA (443 aa).

Positions 1-76 (MMDAWPRCLE…GNGEVALAVG (76 aa)) are domain I, interacts with DnaA modulators. The domain II stretch occupies residues 76-105 (GSRPRAPEPAPAPVAATIAPQAAPIAPFAG). Residues 106 to 323 (NLDSHYTFAN…GALNTLVARA (218 aa)) form a domain III, AAA+ region region. ATP-binding residues include G151, G153, K154, and T155. The domain IV, binds dsDNA stretch occupies residues 324-443 (NFTGRSITVE…WEKLIRKLSE (120 aa)).

The protein belongs to the DnaA family. In terms of assembly, oligomerizes as a right-handed, spiral filament on DNA at oriC.

It is found in the cytoplasm. Plays an essential role in the initiation and regulation of chromosomal replication. ATP-DnaA binds to the origin of replication (oriC) to initiate formation of the DNA replication initiation complex once per cell cycle. Binds the DnaA box (a 9 base pair repeat at the origin) and separates the double-stranded (ds)DNA. Forms a right-handed helical filament on oriC DNA; dsDNA binds to the exterior of the filament while single-stranded (ss)DNA is stabiized in the filament's interior. The ATP-DnaA-oriC complex binds and stabilizes one strand of the AT-rich DNA unwinding element (DUE), permitting loading of DNA polymerase. After initiation quickly degrades to an ADP-DnaA complex that is not apt for DNA replication. Binds acidic phospholipids. In Xanthomonas oryzae pv. oryzae (strain KACC10331 / KXO85), this protein is Chromosomal replication initiator protein DnaA.